The sequence spans 368 residues: Proline-rich protein 5-like (368 aa).

Ser-28 carries the post-translational modification Phosphoserine. Residues 327 to 368 (PSFPPPHRQCSSEPNITDNPDGLEEGARGSQEGSELNCASLS) are disordered. Polar residues-rich tracts occupy residues 335–344 (QCSSEPNITD) and 357–368 (QEGSELNCASLS).

This sequence belongs to the PROTOR family. In terms of assembly, interacts with the mammalian target of rapamycin complex 2 (mTORC2) which contains MTOR, MLST8, PRR5, RICTOR, MAPKAP1 and DEPTOR. Interacts with RFFL. Interacts (via C-terminus) with ZFP36 (via C-terminus); this interaction may accelerate ZFP36-mediated mRNA decay during stress. Interacts with RICTOR. Ubiquitinated. Ubiquitination by RFFL promotes proteasomal degradation of PRR5L thereby modifying the substrate-specific activity of the mTORC2 complex. Ubiquitination by RFFL is stimulated by LPA/lysophosphatidic acid.

In terms of biological role, associates with the mTORC2 complex that regulates cellular processes including survival and organization of the cytoskeleton. Regulates the activity of the mTORC2 complex in a substrate-specific manner preventing for instance the specific phosphorylation of PKCs and thereby controlling cell migration. Plays a role in the stimulation of ZFP36-mediated mRNA decay of several ZFP36-associated mRNAs, such as TNF-alpha and GM-CSF, in response to stress. Required for ZFP36 localization to cytoplasmic stress granule (SG) and P-body (PB) in response to stress. In Homo sapiens (Human), this protein is Proline-rich protein 5-like (PRR5L).